Consider the following 503-residue polypeptide: TGF-beta receptor type-1 (503 aa).

An N-terminal signal peptide occupies residues 1–29 (MEVAAGAPRSRLLLFVLAATATLAPEATA). Residues 30–126 (FQCFCHLCTK…PPSGLGPVEL (97 aa)) lie on the Extracellular side of the membrane. 5 disulfides stabilise this stretch: cysteine 32–cysteine 50, cysteine 34–cysteine 37, cysteine 44–cysteine 67, cysteine 82–cysteine 96, and cysteine 97–cysteine 102. Asparagine 41 carries an N-linked (GlcNAc...) asparagine glycan. Residues 127 to 147 (AAVIAGPVCFVCISLMLMVYI) form a helical membrane-spanning segment. Topologically, residues 148–503 (CHNRTVIHHR…QLSQQEGIKM (356 aa)) are cytoplasmic. Residue serine 165 is modified to Phosphoserine. Residues 175–204 (TTLKDLIYDMTTSGSGSGLPLLVQRTIART) enclose the GS domain. Phosphothreonine; by TGFBR2 occurs at positions 185 and 186. Serine 187, serine 189, and serine 191 each carry phosphoserine; by TGFBR2. The FKBP1A-binding signature appears at 193 to 194 (LP). Residues 205-495 (IVLQESIGKG…LRIKKTLSQL (291 aa)) enclose the Protein kinase domain. Residues 211–219 (IGKGRFGEV) and lysine 232 contribute to the ATP site. Residue aspartate 333 is the Proton acceptor of the active site. Residue lysine 391 forms a Glycyl lysine isopeptide (Lys-Gly) (interchain with G-Cter in SUMO) linkage.

The protein belongs to the protein kinase superfamily. TKL Ser/Thr protein kinase family. TGFB receptor subfamily. In terms of assembly, homodimer; in the endoplasmic reticulum but also at the cell membrane. Heterohexamer; TGFB1, TGFB2 and TGFB3 homodimeric ligands assemble a functional receptor composed of two TGFBR1 and TGFBR2 heterodimers to form a ligand-receptor heterohexamer. The respective affinity of TGBRB1 and TGFBR2 for the ligands may modulate the kinetics of assembly of the receptor and may explain the different biological activities of TGFB1, TGFB2 and TGFB3. Component of a complex composed of TSC22D1 (via N-terminus), TGFBR1 and TGFBR2; the interaction between TSC22D1 and TGFBR1 is inhibited by SMAD7 and promoted by TGFB1. Interacts with CD109; inhibits TGF-beta receptor activation in keratinocytes. Interacts with RBPMS. Interacts (unphosphorylated) with FKBP1A; prevents TGFBR1 phosphorylation by TGFBR2 and stabilizes it in the inactive conformation. Interacts with SMAD2, SMAD3 and ZFYVE9; ZFYVE9 recruits SMAD2 and SMAD3 to the TGF-beta receptor. Interacts with TRAF6 and MAP3K7; induces MAP3K7 activation by TRAF6. Interacts with PARD6A; involved in TGF-beta induced epithelial to mesenchymal transition. Interacts with NEDD4L. Interacts with SMAD7, SMURF1 and SMURF2; SMAD7 recruits NEDD4L, SMURF1 and SMURF2 to the TGF-beta receptor. Interacts with USP15 and VPS39. Interacts with SDCBP (via C-terminus). Interacts with CAV1 and this interaction is impaired in the presence of SDCBP. Interacts with APPL1; interaction is TGF beta dependent; mediates trafficking of the TGFBR1 from the endosomes to the nucleus via microtubules in a TRAF6-dependent manner. Interacts with GPR50; this interaction promotes the constitutive activation of SMAD signaling pathway. Mg(2+) serves as cofactor. The cofactor is Mn(2+). In terms of processing, phosphorylated at basal levels in the absence of ligand. Activated upon phosphorylation by TGFBR2, mainly in the GS domain. Phosphorylation in the GS domain abrogates FKBP1A-binding. N-Glycosylated. Post-translationally, ubiquitinated; undergoes ubiquitination catalyzed by several E3 ubiquitin ligases including SMURF1, SMURF2 and NEDD4L2. Results in the proteasomal and/or lysosomal degradation of the receptor thereby negatively regulating its activity. Deubiquitinated by USP15, leading to stabilization of the protein and enhanced TGF-beta signal. Its ubiquitination and proteasome-mediated degradation is negatively regulated by SDCBP.

Its subcellular location is the cell membrane. It localises to the cell junction. The protein localises to the tight junction. The protein resides in the membrane raft. It is found in the cell surface. The catalysed reaction is L-threonyl-[receptor-protein] + ATP = O-phospho-L-threonyl-[receptor-protein] + ADP + H(+). The enzyme catalyses L-seryl-[receptor-protein] + ATP = O-phospho-L-seryl-[receptor-protein] + ADP + H(+). Its activity is regulated as follows. Kept in an inactive conformation by FKBP1A preventing receptor activation in absence of ligand. CD109 is another inhibitor of the receptor. Its function is as follows. Transmembrane serine/threonine kinase forming with the TGF-beta type II serine/threonine kinase receptor, TGFBR2, the non-promiscuous receptor for the TGF-beta cytokines TGFB1, TGFB2 and TGFB3. Transduces the TGFB1, TGFB2 and TGFB3 signal from the cell surface to the cytoplasm and is thus regulating a plethora of physiological and pathological processes including cell cycle arrest in epithelial and hematopoietic cells, control of mesenchymal cell proliferation and differentiation, wound healing, extracellular matrix production, immunosuppression and carcinogenesis. The formation of the receptor complex composed of 2 TGFBR1 and 2 TGFBR2 molecules symmetrically bound to the cytokine dimer results in the phosphorylation and the activation of TGFBR1 by the constitutively active TGFBR2. Activated TGFBR1 phosphorylates SMAD2 which dissociates from the receptor and interacts with SMAD4. The SMAD2-SMAD4 complex is subsequently translocated to the nucleus where it modulates the transcription of the TGF-beta-regulated genes. This constitutes the canonical SMAD-dependent TGF-beta signaling cascade. Also involved in non-canonical, SMAD-independent TGF-beta signaling pathways. For instance, TGFBR1 induces TRAF6 autoubiquitination which in turn results in MAP3K7 ubiquitination and activation to trigger apoptosis. Also regulates epithelial to mesenchymal transition through a SMAD-independent signaling pathway through PARD6A phosphorylation and activation. The protein is TGF-beta receptor type-1 (TGFBR1) of Sus scrofa (Pig).